Consider the following 62-residue polypeptide: uncharacterized protein (62 aa).

This sequence belongs to the asfivirus C62L family.

This is an uncharacterized protein from African swine fever virus (isolate Tick/South Africa/Pretoriuskop Pr4/1996) (ASFV).